Here is a 248-residue protein sequence, read N- to C-terminus: Triosephosphate isomerase (248 aa).

Lysine 12 contacts substrate. The active-site Electrophile is the histidine 94. Catalysis depends on glutamate 165, which acts as the Proton acceptor.

The protein belongs to the triosephosphate isomerase family. Homodimer.

The catalysed reaction is D-glyceraldehyde 3-phosphate = dihydroxyacetone phosphate. Its pathway is carbohydrate biosynthesis; gluconeogenesis. It participates in carbohydrate degradation; glycolysis; D-glyceraldehyde 3-phosphate from glycerone phosphate: step 1/1. This Bombyx mori (Silk moth) protein is Triosephosphate isomerase (Tpi).